Reading from the N-terminus, the 1050-residue chain is Beta-galactosidase (1050 aa).

Substrate is bound by residues asparagine 100 and aspartate 199. Aspartate 199 is a Na(+) binding site. Glutamate 422, histidine 424, and glutamate 467 together coordinate Mg(2+). Substrate is bound by residues glutamate 467 and 543–546 (EYAH). Residue glutamate 467 is the Proton donor of the active site. The active-site Nucleophile is the glutamate 543. A Mg(2+)-binding site is contributed by asparagine 603. 2 residues coordinate Na(+): phenylalanine 607 and asparagine 610. 2 residues coordinate substrate: asparagine 610 and tryptophan 1025.

The protein belongs to the glycosyl hydrolase 2 family. In terms of assembly, homotetramer. It depends on Mg(2+) as a cofactor. Requires Na(+) as cofactor.

It catalyses the reaction Hydrolysis of terminal non-reducing beta-D-galactose residues in beta-D-galactosides.. The polypeptide is Beta-galactosidase (Yersinia pestis bv. Antiqua (strain Angola)).